The chain runs to 441 residues: Glutamate-1-semialdehyde 2,1-aminomutase (441 aa).

Lysine 270 is modified (N6-(pyridoxal phosphate)lysine).

It belongs to the class-III pyridoxal-phosphate-dependent aminotransferase family. HemL subfamily. Homodimer. The cofactor is pyridoxal 5'-phosphate.

Its subcellular location is the cytoplasm. The enzyme catalyses (S)-4-amino-5-oxopentanoate = 5-aminolevulinate. It functions in the pathway porphyrin-containing compound metabolism; protoporphyrin-IX biosynthesis; 5-aminolevulinate from L-glutamyl-tRNA(Glu): step 2/2. This chain is Glutamate-1-semialdehyde 2,1-aminomutase (hemL), found in Propionibacterium freudenreichii subsp. freudenreichii.